We begin with the raw amino-acid sequence, 563 residues long: Cytidine monophosphate-N-acetylneuraminic acid hydroxylase (563 aa).

Positions 10–108 (LSPAETANLK…VEMDGNDGLF (99 aa)) constitute a Rieske domain. 4 residues coordinate [2Fe-2S] cluster: C50, H52, C71, and H74.

Belongs to the CMP-Neu5Ac hydroxylase family. Requires [2Fe-2S] cluster as cofactor.

The protein localises to the cytoplasm. It catalyses the reaction CMP-N-acetyl-beta-neuraminate + 2 Fe(II)-[cytochrome b5] + O2 + 2 H(+) = CMP-N-glycoloyl-beta-neuraminate + 2 Fe(III)-[cytochrome b5] + H2O. It participates in amino-sugar metabolism; N-acetylneuraminate metabolism. Functionally, sialic acids are components of carbohydrate chains of glycoconjugates and are involved in cell-cell recognition and cell-pathogen interactions. Catalyzes the conversion of CMP-N-acetylneuraminic acid (CMP-Neu5Ac) into its hydroxylated derivative CMP-N-glycolylneuraminic acid (CMP-Neu5Gc), a sialic acid abundantly expressed at the surface of many cells. The chain is Cytidine monophosphate-N-acetylneuraminic acid hydroxylase (CMAH) from Cricetulus griseus (Chinese hamster).